Consider the following 131-residue polypeptide: D-ribose pyranase (131 aa).

Histidine 20 serves as the catalytic Proton donor. Residues aspartate 28, histidine 98, and 120–122 contribute to the substrate site; that span reads YSN.

This sequence belongs to the RbsD / FucU family. RbsD subfamily. Homodecamer.

It localises to the cytoplasm. It carries out the reaction beta-D-ribopyranose = beta-D-ribofuranose. It participates in carbohydrate metabolism; D-ribose degradation; D-ribose 5-phosphate from beta-D-ribopyranose: step 1/2. Functionally, catalyzes the interconversion of beta-pyran and beta-furan forms of D-ribose. This chain is D-ribose pyranase, found in Limosilactobacillus reuteri (strain DSM 20016) (Lactobacillus reuteri).